A 387-amino-acid chain; its full sequence is 8-amino-7-oxononanoate synthase (387 aa).

R20 is a substrate binding site. Residue G107–Y108 participates in pyridoxal 5'-phosphate binding. A substrate-binding site is contributed by H132. S181, H209, and T238 together coordinate pyridoxal 5'-phosphate. K241 carries the post-translational modification N6-(pyridoxal phosphate)lysine. T355 is a binding site for substrate.

Belongs to the class-II pyridoxal-phosphate-dependent aminotransferase family. BioF subfamily. As to quaternary structure, homodimer. Pyridoxal 5'-phosphate serves as cofactor.

The enzyme catalyses 6-carboxyhexanoyl-[ACP] + L-alanine + H(+) = (8S)-8-amino-7-oxononanoate + holo-[ACP] + CO2. It functions in the pathway cofactor biosynthesis; biotin biosynthesis. Functionally, catalyzes the decarboxylative condensation of pimeloyl-[acyl-carrier protein] and L-alanine to produce 8-amino-7-oxononanoate (AON), [acyl-carrier protein], and carbon dioxide. The sequence is that of 8-amino-7-oxononanoate synthase from Dechloromonas aromatica (strain RCB).